Here is a 614-residue protein sequence, read N- to C-terminus: Glutamine--fructose-6-phosphate aminotransferase [isomerizing] (614 aa).

The Nucleophile; for GATase activity role is filled by cysteine 2. A Glutamine amidotransferase type-2 domain is found at 2 to 223 (CGIIGYIGRR…DGEMAVVTRD (222 aa)). SIS domains lie at 292–431 (YLDR…GRTI) and 463–604 (IAVK…VDRP). Lysine 609 functions as the For Fru-6P isomerization activity in the catalytic mechanism.

As to quaternary structure, homodimer.

It is found in the cytoplasm. The catalysed reaction is D-fructose 6-phosphate + L-glutamine = D-glucosamine 6-phosphate + L-glutamate. Its function is as follows. Catalyzes the first step in hexosamine metabolism, converting fructose-6P into glucosamine-6P using glutamine as a nitrogen source. This chain is Glutamine--fructose-6-phosphate aminotransferase [isomerizing], found in Chlorobaculum tepidum (strain ATCC 49652 / DSM 12025 / NBRC 103806 / TLS) (Chlorobium tepidum).